Consider the following 67-residue polypeptide: DNA-directed RNA polymerase subunit omega (67 aa).

The protein belongs to the RNA polymerase subunit omega family. As to quaternary structure, RNAP is composed of a core of 2 alpha, a beta and a beta' subunit. The core is associated with a delta subunit, and at least one of epsilon or omega. When a sigma factor is associated with the core the holoenzyme is formed, which can initiate transcription.

It catalyses the reaction RNA(n) + a ribonucleoside 5'-triphosphate = RNA(n+1) + diphosphate. Its function is as follows. Promotes RNA polymerase assembly. Latches the N- and C-terminal regions of the beta' subunit thereby facilitating its interaction with the beta and alpha subunits. In vitro reconstitution experiments this subunit is dispensible. This Bacillus subtilis (strain 168) protein is DNA-directed RNA polymerase subunit omega (rpoZ).